The primary structure comprises 105 residues: Large ribosomal subunit protein uL24 (105 aa).

It belongs to the universal ribosomal protein uL24 family. Part of the 50S ribosomal subunit.

In terms of biological role, one of two assembly initiator proteins, it binds directly to the 5'-end of the 23S rRNA, where it nucleates assembly of the 50S subunit. Its function is as follows. One of the proteins that surrounds the polypeptide exit tunnel on the outside of the subunit. In Staphylococcus haemolyticus (strain JCSC1435), this protein is Large ribosomal subunit protein uL24.